Reading from the N-terminus, the 346-residue chain is UDP-N-acetylenolpyruvoylglucosamine reductase (346 aa).

An FAD-binding PCMH-type domain is found at G22 to V194. The active site involves R170. The active-site Proton donor is the S246. E342 is an active-site residue.

This sequence belongs to the MurB family. The cofactor is FAD.

The protein localises to the cytoplasm. It catalyses the reaction UDP-N-acetyl-alpha-D-muramate + NADP(+) = UDP-N-acetyl-3-O-(1-carboxyvinyl)-alpha-D-glucosamine + NADPH + H(+). It functions in the pathway cell wall biogenesis; peptidoglycan biosynthesis. Its function is as follows. Cell wall formation. The chain is UDP-N-acetylenolpyruvoylglucosamine reductase from Paraburkholderia xenovorans (strain LB400).